Reading from the N-terminus, the 452-residue chain is Pup--protein ligase (452 aa).

Mg(2+) is bound at residue E9. ATP is bound at residue R53. Y55 provides a ligand contact to Mg(2+). D57 acts as the Proton acceptor in catalysis. E63 provides a ligand contact to Mg(2+). 2 residues coordinate ATP: T66 and W419.

It belongs to the Pup ligase/Pup deamidase family. Pup-conjugating enzyme subfamily.

It catalyses the reaction ATP + [prokaryotic ubiquitin-like protein]-L-glutamate + [protein]-L-lysine = ADP + phosphate + N(6)-([prokaryotic ubiquitin-like protein]-gamma-L-glutamyl)-[protein]-L-lysine.. Its pathway is protein degradation; proteasomal Pup-dependent pathway. It functions in the pathway protein modification; protein pupylation. In terms of biological role, catalyzes the covalent attachment of the prokaryotic ubiquitin-like protein modifier Pup to the proteasomal substrate proteins, thereby targeting them for proteasomal degradation. This tagging system is termed pupylation. The ligation reaction involves the side-chain carboxylate of the C-terminal glutamate of Pup and the side-chain amino group of a substrate lysine. This Thermobifida fusca (strain YX) protein is Pup--protein ligase.